Reading from the N-terminus, the 407-residue chain is Imidazolonepropionase (407 aa).

Positions 74 and 76 each coordinate Fe(3+). His74 and His76 together coordinate Zn(2+). Residues Arg83, Tyr146, and His179 each contribute to the 4-imidazolone-5-propanoate site. Residue Tyr146 participates in N-formimidoyl-L-glutamate binding. His244 contributes to the Fe(3+) binding site. His244 lines the Zn(2+) pocket. Gln247 lines the 4-imidazolone-5-propanoate pocket. Asp319 contributes to the Fe(3+) binding site. Position 319 (Asp319) interacts with Zn(2+). N-formimidoyl-L-glutamate contacts are provided by Asn321 and Gly323. Thr324 is a binding site for 4-imidazolone-5-propanoate.

It belongs to the metallo-dependent hydrolases superfamily. HutI family. Zn(2+) is required as a cofactor. The cofactor is Fe(3+).

It is found in the cytoplasm. The enzyme catalyses 4-imidazolone-5-propanoate + H2O = N-formimidoyl-L-glutamate. Its pathway is amino-acid degradation; L-histidine degradation into L-glutamate; N-formimidoyl-L-glutamate from L-histidine: step 3/3. In terms of biological role, catalyzes the hydrolytic cleavage of the carbon-nitrogen bond in imidazolone-5-propanoate to yield N-formimidoyl-L-glutamate. It is the third step in the universal histidine degradation pathway. The polypeptide is Imidazolonepropionase (Salmonella enteritidis PT4 (strain P125109)).